The chain runs to 89 residues: Small ribosomal subunit protein uS15 (89 aa).

Belongs to the universal ribosomal protein uS15 family. Part of the 30S ribosomal subunit. Forms a bridge to the 50S subunit in the 70S ribosome, contacting the 23S rRNA.

Its function is as follows. One of the primary rRNA binding proteins, it binds directly to 16S rRNA where it helps nucleate assembly of the platform of the 30S subunit by binding and bridging several RNA helices of the 16S rRNA. Forms an intersubunit bridge (bridge B4) with the 23S rRNA of the 50S subunit in the ribosome. In Acholeplasma laidlawii (strain PG-8A), this protein is Small ribosomal subunit protein uS15.